Reading from the N-terminus, the 221-residue chain is MATAPTITDVQVEFLHFPAVVTSPATAKTYFLGGAGERGLTIEGKFIKFTAIGVYLEDKAVASLATKWKGKPSEELINTLDFYRDIISGPFEKLIRGSKILQLSGTEYSRKVMENCVAHLKSVGTYGDAEAKGIEEFAEAFKKVNFPPGASVFYRQSPDGILGLSFSEDATIPGEEAVVIENKAVSAAVLETMIGEHAVSPDLKRSLASRLPAVLNGGIIV.

Threonine 50, asparagine 115, and threonine 192 together coordinate substrate.

It belongs to the chalcone isomerase family.

It catalyses the reaction a chalcone = a flavanone.. It participates in secondary metabolite biosynthesis; flavonoid biosynthesis. Catalyzes the intramolecular cyclization of bicyclic chalcones into tricyclic (S)-flavanones. Responsible for the isomerization of 4,2',4',6'-tetrahydroxychalcone (also termed chalcone) into naringenin. The protein is Chalcone--flavanone isomerase (CHI) of Phaseolus vulgaris (Kidney bean).